Reading from the N-terminus, the 305-residue chain is Ornithine carbamoyltransferase, catabolic (305 aa).

Carbamoyl phosphate is bound by residues 50–53 (STRT), Gln-77, Arg-101, and 128–131 (HPLQ). L-ornithine is bound by residues Asn-159, Asp-223, and 227-228 (SM). Residues 263-264 (CL) and Arg-291 each bind carbamoyl phosphate.

It belongs to the aspartate/ornithine carbamoyltransferase superfamily. OTCase family.

The protein localises to the cytoplasm. The enzyme catalyses carbamoyl phosphate + L-ornithine = L-citrulline + phosphate + H(+). Its pathway is amino-acid degradation; L-arginine degradation via ADI pathway; carbamoyl phosphate from L-arginine: step 2/2. Functionally, reversibly catalyzes the transfer of the carbamoyl group from carbamoyl phosphate (CP) to the N(epsilon) atom of ornithine (ORN) to produce L-citrulline. This chain is Ornithine carbamoyltransferase, catabolic, found in Thermoplasma volcanium (strain ATCC 51530 / DSM 4299 / JCM 9571 / NBRC 15438 / GSS1).